Here is a 302-residue protein sequence, read N- to C-terminus: HTH-type transcriptional regulator AbgR (302 aa).

The HTH lysR-type domain maps to 5–62 (VKIHQIRAFVEVARQGSIRGASRMLNMSQPALSKSIQELEEGLAAQLFFRRSKGVTLT). A DNA-binding region (H-T-H motif) is located at residues 22-41 (IRGASRMLNMSQPALSKSIQ).

It belongs to the LysR transcriptional regulatory family.

Its function is as follows. Could be the regulator of the abg operon. This chain is HTH-type transcriptional regulator AbgR (abgR), found in Escherichia coli (strain K12).